The following is a 371-amino-acid chain: UDP-N-acetylglucosamine--N-acetylmuramyl-(pentapeptide) pyrophosphoryl-undecaprenol N-acetylglucosamine transferase (371 aa).

Residues 15–17, Asn-126, Arg-169, Ser-197, and Gln-298 each bind UDP-N-acetyl-alpha-D-glucosamine; that span reads TGG.

It belongs to the glycosyltransferase 28 family. MurG subfamily.

It is found in the cell inner membrane. The enzyme catalyses di-trans,octa-cis-undecaprenyl diphospho-N-acetyl-alpha-D-muramoyl-L-alanyl-D-glutamyl-meso-2,6-diaminopimeloyl-D-alanyl-D-alanine + UDP-N-acetyl-alpha-D-glucosamine = di-trans,octa-cis-undecaprenyl diphospho-[N-acetyl-alpha-D-glucosaminyl-(1-&gt;4)]-N-acetyl-alpha-D-muramoyl-L-alanyl-D-glutamyl-meso-2,6-diaminopimeloyl-D-alanyl-D-alanine + UDP + H(+). The protein operates within cell wall biogenesis; peptidoglycan biosynthesis. Cell wall formation. Catalyzes the transfer of a GlcNAc subunit on undecaprenyl-pyrophosphoryl-MurNAc-pentapeptide (lipid intermediate I) to form undecaprenyl-pyrophosphoryl-MurNAc-(pentapeptide)GlcNAc (lipid intermediate II). This is UDP-N-acetylglucosamine--N-acetylmuramyl-(pentapeptide) pyrophosphoryl-undecaprenol N-acetylglucosamine transferase from Paramagnetospirillum magneticum (strain ATCC 700264 / AMB-1) (Magnetospirillum magneticum).